A 334-amino-acid polypeptide reads, in one-letter code: GTP 3',8-cyclase (334 aa).

In terms of domain architecture, Radical SAM core spans 13 to 239; that stretch reads RFHRKFYYLR…KVKAANDGPA (227 aa). R22 is a GTP binding site. [4Fe-4S] cluster contacts are provided by C29 and C33. Position 35 (Y35) interacts with S-adenosyl-L-methionine. C36 contacts [4Fe-4S] cluster. R73 serves as a coordination point for GTP. G77 contributes to the S-adenosyl-L-methionine binding site. Residue T104 coordinates GTP. S128 contributes to the S-adenosyl-L-methionine binding site. K165 is a binding site for GTP. M199 lines the S-adenosyl-L-methionine pocket. [4Fe-4S] cluster is bound by residues C262 and C265. Position 267–269 (267–269) interacts with GTP; sequence RLR. Residue C279 coordinates [4Fe-4S] cluster.

This sequence belongs to the radical SAM superfamily. MoaA family. As to quaternary structure, monomer and homodimer. The cofactor is [4Fe-4S] cluster.

It carries out the reaction GTP + AH2 + S-adenosyl-L-methionine = (8S)-3',8-cyclo-7,8-dihydroguanosine 5'-triphosphate + 5'-deoxyadenosine + L-methionine + A + H(+). Its pathway is cofactor biosynthesis; molybdopterin biosynthesis. Functionally, catalyzes the cyclization of GTP to (8S)-3',8-cyclo-7,8-dihydroguanosine 5'-triphosphate. This is GTP 3',8-cyclase from Vibrio vulnificus (strain YJ016).